The following is a 217-amino-acid chain: Small ribosomal subunit protein uS2 (217 aa).

This sequence belongs to the universal ribosomal protein uS2 family.

This is Small ribosomal subunit protein uS2 from Korarchaeum cryptofilum (strain OPF8).